The chain runs to 315 residues: MTCFSSATPHRHHLLLSSPSTSKSLLRFPSSYLKPSPSLLFHGSSRSLLSCSDGSNNRPPPSGDTVPNNFCIIEGSETVQDFVQMQLQEIQDNIRSRRNKIFLLMEEVRRLRVQQRIKSVKAINEDSELEATEMPEITSSIPFLPNVTPKTLKQLYSTSVALISGIIFFGGLIAPNLELKVGLGGTSYEDFIRSLHLPLQLSQVDPIVASFSGGAVGVISTLMLIEVNNVKQQEKKRCKYCLGTGYLPCARCSASGVCLSIDPITRPRATNQLMQVATTKRCLNCSGAGKVMCPTCLCTGMVTASEHDPRFDPFD.

A chloroplast-targeting transit peptide spans 1 to 16 (MTCFSSATPHRHHLLL). A run of 2 helical transmembrane segments spans residues 155–175 (LYST…LIAP) and 207–227 (IVAS…LIEV). A CR-type zinc finger spans residues 225-307 (IEVNNVKQQE…CTGMVTASEH (83 aa)). A CXXCXGXG motif repeat occupies 238 to 245 (CKYCLGTG). The CXXCXXXG motif repeat unit spans residues 249–256 (CARCSASG). Residues 282–289 (CLNCSGAG) form a CXXCXGXG motif repeat. A CXXCXXXG motif repeat occupies 293–300 (CPTCLCTG).

Belongs to the orange-like family. Interacts with PSY1.

The protein resides in the plastid. It localises to the chloroplast membrane. In terms of biological role, may be associated with accumulation of carotenoids in chromoplasts. In Arabidopsis thaliana (Mouse-ear cress), this protein is Protein ORANGE-LIKE, chloroplastic (ORLIKE).